The chain runs to 756 residues: LIM domain and actin-binding protein 1 (756 aa).

Position 1 is an N-acetylmethionine (methionine 1). 2 positions are modified to phosphoserine: serine 15 and serine 55. Residues 44-56 (AAEEANMEKRRSN) are compositionally biased toward basic and acidic residues. Disordered regions lie at residues 44-183 (AAEE…SNKI) and 204-377 (QTKI…AVKK). The span at 107-118 (EVASSSASGVEA) shows a compositional bias: low complexity. Serine 130 is modified (phosphoserine). The span at 140 to 173 (RIKDTEHLKDHSAESKKMENCLAESRHEVGKPET) shows a compositional bias: basic and acidic residues. Positions 164 to 166 (SRH) match the Required for interaction with NPC1L1 motif. Serine 221 bears the Phosphoserine mark. Tyrosine 225 is modified (phosphotyrosine). A phosphoserine mark is found at serine 226 and serine 238. The span at 245–254 (EKSESRRNLE) shows a compositional bias: basic and acidic residues. A Phosphoserine modification is found at serine 259. The segment covering 274–287 (VSKQSSSTNYTNEL) has biased composition (polar residues). A compositionally biased stretch (basic and acidic residues) spans 294–303 (IKTHKLEQKE). Residues serine 339, serine 346, serine 358, serine 365, and serine 370 each carry the phosphoserine modification. In terms of domain architecture, LIM zinc-binding spans 384–444 (ETCVECQKTV…KPHFNQLFKS (61 aa)). At lysine 435 the chain carries N6-succinyllysine. Serine 486 bears the Phosphoserine mark. The interval 489-509 (VEDAPIAKVGVLTASMEAKAS) is required for interaction with MYO5B. The tract at residues 508–726 (ASSQLEKEDK…TTQKQKSQDV (219 aa)) is disordered. Residues 512–523 (LEKEDKPAETKK) show a composition bias toward basic and acidic residues. A compositionally biased stretch (low complexity) spans 533–542 (ELSSSGSALE). The segment covering 552–563 (WPPEDEVSKPEA) has biased composition (basic and acidic residues). 4 positions are modified to phosphoserine: serine 597, serine 600, serine 605, and serine 613. Over residues 627–637 (AERKQMEKASA) the composition is skewed to basic and acidic residues. A compositionally biased stretch (polar residues) spans 638 to 651 (SEKNGSVGKTTWPS). Over residues 652–667 (KESRGGEAAGRSKEVQ) the composition is skewed to basic and acidic residues. Residues 691 to 721 (LQQQSPLEPKSKNWSSFADNTSAKEFTTQKQ) show a composition bias toward polar residues. A phosphoserine mark is found at serine 695, serine 723, and serine 738.

Interacts with NPC1L1; bridges NPC1L1 with MYO5B. Interacts with MYO5B; bridges MYO5B with NPC1L1. Interacts with PXN; this complex stabilizes actin dynamics. Interacts with F-actin and G-actin. Interacts with LUZP1 (via C-terminus); both proteins restrict ciliation and may work together to regulate this process. Binds RAB40B (GTP-bound); interaction influences LIMA1 subcellular localization in lamellipodia during cell migration. In terms of processing, phosphorylation of the C-terminal region by MAPK1/MAPK3 reduces its association with F-actin and contributes to actin filament reorganization and enhances cell motility. Ubiquitinated by the ECS(RAB40B) complex leading to its degradation. In terms of tissue distribution, widely expressed. Highest levels of isoform 2 are expressed in lung, spleen and small intestine. Isoform 2 is expressed at higher levels than isoform 1 in most tissues except liver, fat and kidney. Isoform 1 and isoform 2 are expressed at low levels in skeletal muscle, heart, stomach and lymph.

The protein resides in the cytoplasm. It is found in the cell junction. The protein localises to the focal adhesion. It localises to the cytoskeleton. Its subcellular location is the stress fiber. The protein resides in the cell membrane. It is found in the cell projection. The protein localises to the ruffle. It localises to the lamellipodium. Functionally, actin-binding protein involved in actin cytoskeleton regulation and dynamics. Increases the number and size of actin stress fibers and inhibits membrane ruffling. Inhibits actin filament depolymerization. Bundles actin filaments, delays filament nucleation and reduces formation of branched filaments. Acts as a negative regulator of primary cilium formation. Plays a role in cholesterol homeostasis. Influences plasma cholesterol levels through regulation of intestinal cholesterol absorption. May act as a scaffold protein by regulating NPC1L1 transportation, an essential protein for cholesterol absorption, to the plasma membrane by recruiting MYO5B to NPC1L1, and thus facilitates cholesterol uptake. The chain is LIM domain and actin-binding protein 1 from Sus scrofa (Pig).